Reading from the N-terminus, the 194-residue chain is Calcium channel flower (194 aa).

Helical transmembrane passes span 35–55 (LGIVAAFFAILFGLWNVFSII), 66–88 (IIQMVAGFVVMLLEALCCFVCFE), and 107–127 (GLYIAMAIPPIILCFGLASLF).

The protein belongs to the calcium channel flower family. In terms of assembly, homomultimer. Associates with the dally/ magu complex.

The protein localises to the cell membrane. It is found in the cytoplasmic vesicle. It localises to the secretory vesicle. The protein resides in the synaptic vesicle membrane. Its subcellular location is the presynaptic cell membrane. The protein localises to the endosome. Channel activity is inhibited by La(3+), which reduces Ca(2+) influx and thus inhibits it's function in promoting activity-dependent bulk endocytosis (ADBE) in response to high stimuli. In terms of biological role, transmembrane protein which mediates synaptic endocytosis, fitness-based cell culling, neuronal culling, morphogen gradient scaling, and calcium transport. Regulates synaptic endocytosis and hence couples exo- with endocytosis. Controls two major modes of synaptic vesicle (SV) endocytosis in the synaptic boutons of neuromuscular junctions (NMJs); Ca(2+) channel-independent Clathrin-mediated endocytosis (CME) in response to mild stimulation, and Ca(2+) channel-dependent activity-dependent bulk endocytosis (ADBE) in response to strong stimulation. Functions in ADBE and subsequent SV reformation from bulk endosomes by initiating Ca(2+) channel-dependent phosphatidylinositol 4,5-bisphosphate (PtdIns(4,5)P2) compartmentalization in synaptic boutons. There it acts at the periactive zone to provide the low Ca(2+) levels required to initiate Calcineurin activation and upregulate PtdIns(4,5)P2. Conversely PtdIns(4,5)P2 enhances fwe Ca(2+) channel-activity, establishing a positive feedback loop that induces PtdIns(4,5)P2 microdomain at the periactive zone. These microdomains trigger bulk membrane invagination (i.e. ADBE) by triggering actin polymerization while also promoting localization of fwe to bulk endosomes, thereby removing the ADBE trigger to reduce endocytosis and prevent excess membrane uptake. PtdIns(4,5)P2 then promotes SV reformation from the bulk endosomes, to coordinate ADBE and subsequent SV reformation. Different combinations of the flower isoforms at the cell membrane are also required for the identification and elimination of suboptimal or supernumerary cells during development, regeneration, and adulthood. Required for the recognition and elimination of unfit cells in the developing wing during cell competition. In the developing pupal retina, mediates the elimination of unwanted postmitotic neurons, including supernumerary photoreceptor neurons that form at the periphery of the retina and are contained within incomplete ommatidia units. Also required for efficient elimination and replacement of old neurons by newly generated neurons during regeneration in the adult brain following mechanical injury. Downstream of the flower fitness fingerprints, cells identified as unwanted or unfit are eliminated via apoptosis through the expression of ahuizotl (azot). However, the cells marked for elimination by the flower isoforms only undergo apoptosis if additional thresholds are met; (1) their neighboring fit/healthy cells express different levels of the fwe isoforms, and (2) the levels of the protective signal SPARC expressed by the loser or unwanted cells are unable to inhibit caspase activation. These additional thresholds for flower-mediated apoptosis, allows useful cells to recover from transient and limited stress before they are unnecessarily eliminated. Functions with dally and magu in a mechanism of scaling, which utilises apoptosis to ensure that the dpp morphogen gradient, which mediates organ growth, remains proportional to the size of the growing wing. In this mechanism, fwe represses dally- and Magu-dependent activity in expanding the gradient, and dally/Magu inhibits fwe-dependent apoptosis to keep cell death rate low. When the levels of these different proteins are optimally regulated the gradient correctly scales with organ growth but when this fails, fwe-mediated apoptosis is activated to trim the developing tissue to match the correct size of the gradient. The sequence is that of Calcium channel flower from Drosophila sechellia (Fruit fly).